The primary structure comprises 251 residues: Sec-independent protein translocase protein TatC (251 aa).

6 helical membrane passes run A23–L43, S73–I93, I104–F124, L159–V179, I197–Q217, and F218–I238.

It belongs to the TatC family. In terms of assembly, the Tat system comprises two distinct complexes: a TatABC complex, containing multiple copies of TatA, TatB and TatC subunits, and a separate TatA complex, containing only TatA subunits. Substrates initially bind to the TatABC complex, which probably triggers association of the separate TatA complex to form the active translocon.

The protein resides in the cell inner membrane. Its function is as follows. Part of the twin-arginine translocation (Tat) system that transports large folded proteins containing a characteristic twin-arginine motif in their signal peptide across membranes. Together with TatB, TatC is part of a receptor directly interacting with Tat signal peptides. This is Sec-independent protein translocase protein TatC from Rickettsia prowazekii (strain Madrid E).